We begin with the raw amino-acid sequence, 461 residues long: Fumarate hydratase class II (461 aa).

Residues 98–100 (SGT), 129–132 (HPND), 139–141 (SSN), and T187 contribute to the substrate site. H188 acts as the Proton donor/acceptor in catalysis. Residue S318 is part of the active site. Substrate-binding positions include S319 and 324–326 (KVN).

The protein belongs to the class-II fumarase/aspartase family. Fumarase subfamily. Homotetramer.

It localises to the cytoplasm. The enzyme catalyses (S)-malate = fumarate + H2O. It participates in carbohydrate metabolism; tricarboxylic acid cycle; (S)-malate from fumarate: step 1/1. Involved in the TCA cycle. Catalyzes the stereospecific interconversion of fumarate to L-malate. The polypeptide is Fumarate hydratase class II (Rickettsia prowazekii (strain Madrid E)).